A 152-amino-acid polypeptide reads, in one-letter code: Transcriptional regulator MraZ (152 aa).

2 consecutive SpoVT-AbrB domains span residues 5-52 and 81-124; these read ASAI…PIHE and AHEV…DEQA.

This sequence belongs to the MraZ family. As to quaternary structure, forms oligomers.

It localises to the cytoplasm. The protein resides in the nucleoid. The polypeptide is Transcriptional regulator MraZ (Shewanella putrefaciens (strain CN-32 / ATCC BAA-453)).